The primary structure comprises 586 residues: BTB/POZ domain and ankyrin repeat-containing protein NPR1 (586 aa).

A BTB domain is found at 63–139; it reads SDADIVVEGI…VYTGKLKPSP (77 aa). Residues 142 to 156 form a C2HC NPR-type zinc finger; it reads VSTCVHNVCAHDACR. Cys145, Cys150, His152, and Cys155 together coordinate Zn(2+). ANK repeat units follow at residues 266 to 296, 298 to 325, and 329 to 358; these read KRIRRIHKALDSDDVELVKLLLTESNITLDE, NALHYAAAYCDPKVVTEVLALGLADVNL, and RGYTALHIAVMRKEPSIIVLLLTKGARASE. The salicylic acid-binding core (SBC) stretch occupies residues 388 to 522; that stretch reads EANKDRICID…LDKFIDDDLP (135 aa). Residue Arg433 participates in salicylate binding. The disordered stretch occupies residues 561-586; that stretch reads NLSGLSSSSSTTSPEKIGANQKVREP. Residues 562 to 573 are compositionally biased toward low complexity; it reads LSGLSSSSSTTS.

Belongs to the plant 'ANKYRIN-BTB/POZ' family. 'NPR1-like' subfamily. Highly expressed in leaves. Expressed at low levels in roots and stems.

It localises to the cytoplasm. The protein resides in the nucleus. It is found in the nuclear body. It participates in protein modification; protein ubiquitination. In terms of biological role, salicylic acid (SA)-binding substrate-specific adapter of an E3 ubiquitin-protein ligase complex (CUL3-RBX1-BTB) which mediates the ubiquitination and subsequent proteasomal degradation of target proteins. Transcription cofactor that represses gene expression in the absence of salicylic acid (SA), when attached to negative cis-elements (W-box) with WRKY transcription factors, but stimulates gene expression upon activation by SA, when sumoylated and attached to positive cis-elements (as-1) with TGA transcription factors, thus confering immunity through a series of gene regulations ending in a significant increase in antimicrobial and defense genes expression. Probable component of the salicylic acid (SA) defense signaling pathway and pathogen-induced systemic acquired resistance (SAR). May be involved in disease resistance against fungal pathogens. May be involved in tolerance to salt and osmotic stresses. In Malus hupehensis (Chinese crab apple), this protein is BTB/POZ domain and ankyrin repeat-containing protein NPR1.